A 590-amino-acid polypeptide reads, in one-letter code: FAD-linked oxidoreductase malF (590 aa).

The first 18 residues, 1–18, serve as a signal peptide directing secretion; it reads MKYTATFALLILAIGIQT. N-linked (GlcNAc...) asparagine glycans are attached at residues Asn44, Asn80, Asn103, Asn178, and Asn396. An FAD-binding PCMH-type domain is found at 117 to 303; it reads AQGRIPLYSA…TSVTLRAFAD (187 aa).

This sequence belongs to the oxygen-dependent FAD-linked oxidoreductase family. The cofactor is FAD.

In terms of biological role, FAD-linked oxidoreductase; part of the gene cluster that mediates the biosynthesis of malbrancheamide, a dichlorinated fungal indole alkaloid that belongs to a family of natural products containing a characteristic bicyclo[2.2.2]diazaoctane core. The first step of malbrancheamide biosynthesis involves coupling of L-proline and L-tryptophan by malG, a bimodular NRPS, to produce L-Pro-L-Trp aldehyde through reductive offloading. This compound undergoes spontaneous cyclization and dehydration to give a dienamine which is reverse prenylated at C-2 by malE. The other prenyltransferase present in the cluster, malB, displays modest activity, suggesting that may be a redundant gene in the pathway. Subsequently, a [4+2] Diels-Alder cyclo-addition catalyzed by the bifunctional enzyme malC forms the characteristic bicyclo[2.2.2]diazaoctane ring of premalbrancheamid. Finally, the flavin-dependent halogenase malA catalyzes the iterative dichlorination of the indole ring of premalbrancheamide to yield C-9 monochlorinated malbrancheamide B, C-8 monochlorinated isomalbrancheamide B, and dichlorinated malbrancheamide. MalA is also able to brominate premalbrancheamide at C-9 to yield malbrancheamide C, and, to a lesser extend, at C-8 to yield isomalbrancheamide C. Finally, malA can brominate C-9 monochlorinated malbrancheamide B at C-8 to yield malbrancheamide D, or C-8 monochlorinated isomalbrancheamide B at C-9 to produce isomalbrancheamide D. The polypeptide is FAD-linked oxidoreductase malF (Malbranchea aurantiaca).